The chain runs to 1032 residues: MSFRQKRTRIPLLAMTVTALAAAVCGVTTAPAATGAEVAVPLSVGAAAGNATPIPGYVIQSSAQVSDDSAVSKPGFPTSGWYPVSSRSTVYAGLLQNGKYADPFYSTNMQNVPAAQFSVPWWYRTDLNVDDTSSRTYLDFSGVLSKADVWVNGTKVATKDQVNGAYTRHDLDITAQVHTGVNSVAFKVYPNDPNRDLSMGWIDWAQTPPDQNMGIVRDVLVRRSGAVALRSAHVIQKLNSALDHADLTVKADVRNDSANAVQTTVAGTVAGKPISQTVSLAAKERKTVTFPLVGLDRPNVWWPAGMGGQHRYDLDLTASVGGTPSDAAKSKFGVRDVKATLNSSGGRQYSVNGKPLLIRGGGYTPDLFLRWNETAAADKLKYVLNLGLNTVRLEGHIEPDEFFDIADDLGVLTMPGWECCDKWEGQVNGEEKGEPWVESDYPIAKASMFSEAERLRDHPSVISFHIGSDFAPDRRIEQGYLDAMKAADFLLPVIPAASARPSPITGASGMKMNGPYDYVPPVYWYDKSQKDRGGAWSFNSETSAGVDIPTMDTLKRMMSASELDTMWKNPSAKQYHRSSSDTFGNLKLFGDALTKRYGASANLNDFVRKAQLSQYENVRAEFESHSRNYTDSTNPSTGLIYWMLNSPWTSLHWQLFDAYMDQNGAYYGAKKANEPLHIQYSHDNRSVVVINQTSNAVSGLTATTKLYNLDGTEKYSNTKTGLSVGALGAKATAVTVPAVSGLSTTYLAKWVLTDSSGKEVSRNVYWLSTKADTLNWGGSDWYYTPQSAFADLSGLNNLGQSAVGATANSVAGADGTTTTTVTLKNTSGGRLPAFYVDSKVVDSAGKPVLPVEWNDNAVSLWPGETTTLTAKYRTADLKGSKPSVRISGWNTGTQTVPADGSGPGPSDPVDYQAEDATIVQGAVESNHAGYTGTGFVNYDNVAGSSVEWTVTVPSAGTYDVVVRYANGTTTSRPLDFSVNGSISASGVAFGSTGTWPAWTTKTVRVTLAAGVNKIKAVATTANGGPNVDKITL.

The N-terminal stretch at 1–32 is a signal peptide; the sequence is MSFRQKRTRIPLLAMTVTALAAAVCGVTTAPA. The propeptide occupies 33 to 46; the sequence is ATGAEVAVPLSVGA. Asp-469 serves as the catalytic Proton donor. Glu-541 serves as the catalytic Nucleophile. Positions 883 to 908 are disordered; it reads SVRISGWNTGTQTVPADGSGPGPSDP. The 124-residue stretch at 909–1032 folds into the CBM6 domain; it reads VDYQAEDATI…GGPNVDKITL (124 aa).

Belongs to the glycosyl hydrolase 2 family. Monomer.

The protein resides in the secreted. The catalysed reaction is Hydrolysis of chitosan or chitosan oligosaccharides to remove successive D-glucosamine residues from the non-reducing termini.. Its function is as follows. Hydrolyzes chitosan and chitooligosaccharides with retention of anomeric configuration. Has maximum activity on chitotetraose, chitopentaose and their corresponding alcohols, with a slight decrease in the rate of hydrolysis on longer chains. Has no activity against beta-D-glucopyranoside, beta-D-xylopyranoside, beta-D-mannoside, beta-D-glucuronide, beta-D-galactoside, beta-D-N-acetylgalactosamide, beta-D-N-acetylglucosaminide and alpha-D-N-acetylglucosaminide. This Amycolatopsis orientalis (Nocardia orientalis) protein is Exo-beta-D-glucosaminidase.